A 335-amino-acid polypeptide reads, in one-letter code: NAC domain-containing protein 60 (335 aa).

The 143-residue stretch at 14–156 (TFPGFKFSPT…ALVICRLRRN (143 aa)) folds into the NAC domain. A DNA-binding region spans residues 112–162 (IGTKRTLVFHIGRAPKGGRTEWLMHEYCMIGVSLDALVICRLRRNTEFQGS). The chain crosses the membrane as a helical span at residues 315 to 335 (ARWDVVVWLLVMIAVLVFYLV).

Expressed in roots, rosette leaves, cauline leaves, shoot apex, stems and flowers.

The protein resides in the membrane. It is found in the nucleus. Its function is as follows. Transcriptional activator activated by proteolytic cleavage through regulated intramembrane proteolysis (RIP). Transcription factor involved in modulation of abscisic acid (ABA) signaling. Attenuates ABA sensitivity and glucose-induced ABA accumulation. Reduces the expression of ABI4 gene. The polypeptide is NAC domain-containing protein 60 (Arabidopsis thaliana (Mouse-ear cress)).